We begin with the raw amino-acid sequence, 245 residues long: 1-(5-phosphoribosyl)-5-[(5-phosphoribosylamino)methylideneamino] imidazole-4-carboxamide isomerase (245 aa).

D7 serves as the catalytic Proton acceptor. D129 serves as the catalytic Proton donor.

Belongs to the HisA/HisF family.

The protein localises to the cytoplasm. It carries out the reaction 1-(5-phospho-beta-D-ribosyl)-5-[(5-phospho-beta-D-ribosylamino)methylideneamino]imidazole-4-carboxamide = 5-[(5-phospho-1-deoxy-D-ribulos-1-ylimino)methylamino]-1-(5-phospho-beta-D-ribosyl)imidazole-4-carboxamide. The protein operates within amino-acid biosynthesis; L-histidine biosynthesis; L-histidine from 5-phospho-alpha-D-ribose 1-diphosphate: step 4/9. The chain is 1-(5-phosphoribosyl)-5-[(5-phosphoribosylamino)methylideneamino] imidazole-4-carboxamide isomerase from Salmonella enteritidis PT4 (strain P125109).